The chain runs to 215 residues: Cytochrome b6 (215 aa).

The chain crosses the membrane as a helical span at residues 32-52 (IFYCFGGLVLTCFLIQVATGF). Residue Cys-35 coordinates heme c. His-86 and His-100 together coordinate heme b. 3 helical membrane-spanning segments follow: residues 90–110 (ASMMVLMMVLHVFRVYLTGGF), 116–136 (LTWVTGVTLSVVTVSFGVTGY), and 186–206 (AHTFVLPLAAAVLMLTHFLMI). 2 residues coordinate heme b: His-187 and His-202.

It belongs to the cytochrome b family. PetB subfamily. As to quaternary structure, the 4 large subunits of the cytochrome b6-f complex are cytochrome b6, subunit IV (17 kDa polypeptide, PetD), cytochrome f and the Rieske protein, while the 4 small subunits are PetG, PetL, PetM and PetN. The complex functions as a dimer. Heme b is required as a cofactor. Heme c serves as cofactor.

The protein localises to the plastid. The protein resides in the chloroplast thylakoid membrane. Functionally, component of the cytochrome b6-f complex, which mediates electron transfer between photosystem II (PSII) and photosystem I (PSI), cyclic electron flow around PSI, and state transitions. This is Cytochrome b6 from Phaeodactylum tricornutum (strain CCAP 1055/1).